The chain runs to 203 residues: 5-formyltetrahydrofolate cyclo-ligase (203 aa).

Ala2 carries the post-translational modification N-acetylalanine. ATP is bound by residues 10–14 (KRSLR) and Arg14. Substrate-binding positions include Leu56, Glu61, and 148–152 (RGKGY). 145–153 (RLGRGKGYY) is an ATP binding site. Residues Asp154 and Asp189 each contribute to the Mg(2+) site.

This sequence belongs to the 5-formyltetrahydrofolate cyclo-ligase family. In terms of assembly, monomer. Mg(2+) serves as cofactor.

It localises to the cytoplasm. The enzyme catalyses (6S)-5-formyl-5,6,7,8-tetrahydrofolate + ATP = (6R)-5,10-methenyltetrahydrofolate + ADP + phosphate. In terms of biological role, contributes to tetrahydrofolate metabolism. Helps regulate carbon flow through the folate-dependent one-carbon metabolic network that supplies carbon for the biosynthesis of purines, thymidine and amino acids. Catalyzes the irreversible conversion of 5-formyltetrahydrofolate (5-FTHF) to yield 5,10-methenyltetrahydrofolate. This chain is 5-formyltetrahydrofolate cyclo-ligase (MTHFS), found in Homo sapiens (Human).